We begin with the raw amino-acid sequence, 121 residues long: UPF0102 protein Hhal_2103 (121 aa).

Residues 1–20 (MMAPQTTRNDPRQRGQEAEE) are disordered. Over residues 9–20 (NDPRQRGQEAEE) the composition is skewed to basic and acidic residues.

It belongs to the UPF0102 family.

The polypeptide is UPF0102 protein Hhal_2103 (Halorhodospira halophila (strain DSM 244 / SL1) (Ectothiorhodospira halophila (strain DSM 244 / SL1))).